Consider the following 243-residue polypeptide: Adenylate kinase 4 (243 aa).

40–45 (GSGKGT) contributes to the ATP binding site. The tract at residues 60–89 (ATGDMLRAAVAAKTPLGVKAKEAMDKGELV) is NMP. AMP contacts are provided by residues T61, R66, 87 to 89 (ELV), 115 to 118 (GFPR), and Q122. The tract at residues 156-193 (GRWIHPSSGRSYHTKFAPPKVPGVDDVTGEPLIQRKDD) is LID. R157 lines the ATP pocket. The AMP site is built by R190 and R201.

It belongs to the adenylate kinase family.

The protein resides in the cytoplasm. It carries out the reaction AMP + ATP = 2 ADP. Its function is as follows. Catalyzes the reversible transfer of the terminal phosphate group between ATP and AMP. Plays an important role in cellular energy homeostasis and in adenine nucleotide metabolism. This Oryza sativa subsp. japonica (Rice) protein is Adenylate kinase 4 (ADK-B).